The primary structure comprises 292 residues: uncharacterized protein (292 aa).

Belongs to the glycosyltransferase 2 family. WaaE/KdtX subfamily.

This is an uncharacterized protein from Rickettsia prowazekii (strain Madrid E).